The sequence spans 201 residues: Probable cytokinin riboside 5'-monophosphate phosphoribohydrolase LOG6 (201 aa).

Substrate is bound by residues E89, R107 to K108, G124 to E130, and T136.

The protein belongs to the LOG family.

The enzyme catalyses N(6)-(dimethylallyl)adenosine 5'-phosphate + H2O = N(6)-dimethylallyladenine + D-ribose 5-phosphate. It carries out the reaction 9-ribosyl-trans-zeatin 5'-phosphate + H2O = trans-zeatin + D-ribose 5-phosphate. Its function is as follows. Cytokinin-activating enzyme working in the direct activation pathway. Phosphoribohydrolase that converts inactive cytokinin nucleotides to the biologically active free-base forms. The sequence is that of Probable cytokinin riboside 5'-monophosphate phosphoribohydrolase LOG6 (LOG6) from Arabidopsis thaliana (Mouse-ear cress).